Consider the following 417-residue polypeptide: Carbon catabolite repressor protein 4 homolog 4 (417 aa).

Position 2 is an N-acetylserine (Phe-2). Glu-143 serves as a coordination point for Mg(2+).

Belongs to the CCR4/nocturin family. As to quaternary structure, component of the CCR4-NOT complex, at least composed of CRR4 and CAF1 proteins. Forms homooligomers. It depends on Mg(2+) as a cofactor.

The protein resides in the nucleus. It is found in the cytoplasm. The catalysed reaction is Exonucleolytic cleavage of poly(A) to 5'-AMP.. Acts as a catalytic component of the CCR4-NOT core complex, which in the nucleus seems to be a general transcription factor, and in the cytoplasm the major mRNA deadenylase involved in mRNA turnover. Transcriptional regulator of circadian rhythms with poly(A)-degrading activity that affects the expression and rhythmicity of the clock core oscillator genes TOC1 and CCA1. Deadenylation may be a mechanism involved in the regulation of the circadian clock. May play a negative role in response against oxidative stress. Possesses magnesium-dependent poly(A)-specific exoribonuclease activity in vitro and is almost inactive with poly(U), poly(C) and poly(G) as substrates. This is Carbon catabolite repressor protein 4 homolog 4 from Arabidopsis thaliana (Mouse-ear cress).